Here is a 375-residue protein sequence, read N- to C-terminus: Ketohexokinase (375 aa).

Residue aspartate 319 coordinates beta-D-fructose.

This sequence belongs to the carbohydrate kinase PfkB family. Homodimer.

It carries out the reaction beta-D-fructose + ATP = beta-D-fructose 1-phosphate + ADP + H(+). The protein operates within carbohydrate metabolism; fructose metabolism. With respect to regulation, activated in the presence of 0.5 M KCl. 85% activity at 3.5 M KCl. 60% activity without KCl. Catalyzes the ATP-dependent phosphorylation of the ketose sugar fructose to fructose-1-phosphate. Does not produce fructose-6-phosphate. The sugars D-glucose, D-galactose, L-rhamnose, D-xylose, L-arabinose and D-ribose are not substrates of this enzyme. This chain is Ketohexokinase, found in Haloferax volcanii (strain ATCC 29605 / DSM 3757 / JCM 8879 / NBRC 14742 / NCIMB 2012 / VKM B-1768 / DS2) (Halobacterium volcanii).